The following is a 445-amino-acid chain: Phosphoglucosamine mutase (445 aa).

Ser-102 functions as the Phosphoserine intermediate in the catalytic mechanism. Mg(2+)-binding residues include Ser-102, Asp-241, Asp-243, and Asp-245. Ser-102 is modified (phosphoserine).

Belongs to the phosphohexose mutase family. Mg(2+) is required as a cofactor. In terms of processing, activated by phosphorylation.

The catalysed reaction is alpha-D-glucosamine 1-phosphate = D-glucosamine 6-phosphate. In terms of biological role, catalyzes the conversion of glucosamine-6-phosphate to glucosamine-1-phosphate. This chain is Phosphoglucosamine mutase, found in Hahella chejuensis (strain KCTC 2396).